Reading from the N-terminus, the 272-residue chain is Phosphatidylglycerol--prolipoprotein diacylglyceryl transferase (272 aa).

Helical transmembrane passes span 19–39 (ISIR…YFLV), 58–78 (LNTV…VVFY), and 94–114 (WHGG…GLIF). Arginine 141 serves as a coordination point for a 1,2-diacyl-sn-glycero-3-phospho-(1'-sn-glycerol). The next 2 helical transmembrane spans lie at 207–227 (GTIL…IENF) and 234–254 (LGFI…MILC).

Belongs to the Lgt family.

The protein localises to the cell inner membrane. It catalyses the reaction L-cysteinyl-[prolipoprotein] + a 1,2-diacyl-sn-glycero-3-phospho-(1'-sn-glycerol) = an S-1,2-diacyl-sn-glyceryl-L-cysteinyl-[prolipoprotein] + sn-glycerol 1-phosphate + H(+). It functions in the pathway protein modification; lipoprotein biosynthesis (diacylglyceryl transfer). In terms of biological role, catalyzes the transfer of the diacylglyceryl group from phosphatidylglycerol to the sulfhydryl group of the N-terminal cysteine of a prolipoprotein, the first step in the formation of mature lipoproteins. The polypeptide is Phosphatidylglycerol--prolipoprotein diacylglyceryl transferase (Desulfotalea psychrophila (strain LSv54 / DSM 12343)).